The primary structure comprises 580 residues: Keratin, type II cytoskeletal 5 (580 aa).

The segment at 1-161 is head; the sequence is MSRQSSVSFR…DPTIQRVRTE (161 aa). 4 positions are modified to phosphoserine: Ser5, Ser8, Ser16, and Ser21. At Thr24 the chain carries Phosphothreonine; by CDK1. Residues Ser26, Ser36, Ser47, Ser61, Ser68, Ser72, Ser75, and Ser79 each carry the phosphoserine modification. Thr145 carries the post-translational modification Phosphothreonine; by CDK1. The residue at position 160 (Thr160) is a Phosphothreonine; by AURKB. A coil 1A region spans residues 162-197; that stretch reads EREQIKTLNNKFASFIDKVRFLEQQNKVLDTKWALL. One can recognise an IF rod domain in the interval 162 to 475; it reads EREQIKTLNN…KLLEGEECRL (314 aa). Residues 198 to 216 form a linker 1 region; sequence QEQGTKTIKQNLDPLFEQY. Positions 217–309 are coil 1B; sequence INNLRRQLDG…FFDAELSQMQ (93 aa). A linker 12 region spans residues 310–332; it reads THVSDTSVVLSMDNNRSLDLDSI. Positions 333-471 are coil 2; the sequence is IAEVKAQYED…ATYRKLLEGE (139 aa). Residues 472–580 form a tail region; it reads ECRLSGEGVG…TSSSRRSFKS (109 aa). The residue at position 526 (Arg526) is an Omega-N-methylarginine. The disordered stretch occupies residues 555 to 580; sequence FGSGGGSGSSVKFVSTTSSSRRSFKS. Positions 563–580 are enriched in low complexity; sequence SSVKFVSTTSSSRRSFKS.

It belongs to the intermediate filament family. As to quaternary structure, heterodimer of a type I and a type II keratin. Heterodimer with type I keratin KRT25 leading to the formation of keratin intermediate filament (KIF) network. Forms a heterodimer (via 2B domains) with KRT14 (via 2B domains). Interacts with PLEC isoform 1C, when in a heterodimer with KRT14. Interacts with TCHP. Interacts with EPPK1. Interacts with AMELX. Interacts with PKP1 (via N-terminus) and PKP2. In terms of processing, phosphorylated by CDK1, AURKB and Rho-kinase, phosphorylation is regulated by the cell cycle. Thr-24 phosphorylation, mediated by CDK1, peaks during prometaphase or metaphase cells with phosphorylated filamentous structures evident throughout the cytoplasm during early mitosis. CDK1 phosphorylates Thr-24 in mitotic cells at the site of injury. O-glycosylated. In terms of tissue distribution, expressed in the corneal epithelium (at protein level). Expressed in the epidermis of the ear (at protein level). Expressed in the basal and spinous layers of the skin at birth (at protein level).

It is found in the cytoplasm. Its function is as follows. Required for the formation of keratin intermediate filaments in the basal epidermis and maintenance of the skin barrier in response to mechanical stress. Regulates the recruitment of Langerhans cells to the epidermis, potentially by modulation of the abundance of macrophage chemotactic cytokines, macrophage inflammatory cytokines and CTNND1 localization in keratinocytes. This is Keratin, type II cytoskeletal 5 from Mus musculus (Mouse).